Reading from the N-terminus, the 239-residue chain is Non-structural protein V (239 aa).

2 disordered regions span residues 30-104 (PVET…ADEA) and 126-180 (NKSS…HRRE). Residues 65 to 74 (TPDRQDRSDK) show a composition bias toward basic and acidic residues. Composition is skewed to polar residues over residues 89–98 (PATSTDQPPT) and 143–153 (ASSTSDSTAGE). 8 residues coordinate Zn(2+): H177, C196, C200, C212, C214, C217, C221, and C224.

As to quaternary structure, interacts with host STAT1. Interacts with host TXNL1. Interacts (via C-terminus) with host CacyBP; this interaction inhibits host cell apoptosis.

The protein localises to the host cytoplasm. The protein resides in the host nucleus. Its function is as follows. Protects the virus against cell antiviral state by blocking host interferon signaling. Mechanistically, targets host phosphorylated STAT1 (phospho-STAT1) for degradation, thereby inhibiting the interferon alpha signaling pathway. Plays a role in the inhibition of host apoptosis. Interacts with and down-regulates the expression of host TXNL1. In turn, inhibits TXNL1-induced apoptosis through the BCL2-BAX-caspase 3 pathway. Inhibits host apoptosis also by negatively regulating host CacyBP/SIP. Promotes viral replication by activating the extracellular signal-regulated kinase (ERK) pathway. This is Non-structural protein V (P/V) from Gallus gallus (Chicken).